Consider the following 204-residue polypeptide: High frequency lysogenization protein HflD homolog (204 aa).

Belongs to the HflD family.

Its subcellular location is the cytoplasm. It localises to the cell inner membrane. This Aeromonas hydrophila subsp. hydrophila (strain ATCC 7966 / DSM 30187 / BCRC 13018 / CCUG 14551 / JCM 1027 / KCTC 2358 / NCIMB 9240 / NCTC 8049) protein is High frequency lysogenization protein HflD homolog.